The chain runs to 389 residues: Transcription factor TGAL10 (389 aa).

The tract at residues 80-110 is disordered; that stretch reads DDQDNAAALQESPRHASDSFEQEASKPRDKI. A compositionally biased stretch (basic and acidic residues) spans 91–110; that stretch reads SPRHASDSFEQEASKPRDKI. A bZIP domain is found at 107 to 151; sequence RDKIQRRLAQNREAARKSRLRKKAYIQNLETSRMKLAHLEQEITR. Residues 109-129 form a basic motif region; it reads KIQRRLAQNREAARKSRLRKK. The segment at 135–149 is leucine-zipper; that stretch reads LETSRMKLAHLEQEI. The DOG1 domain occupies 176-389; it reads VVTFEVEYAQ…LHVRRRAELG (214 aa). Disordered regions lie at residues 320-345 and 370-389; these read TSCD…GDGG and HRRS…AELG. Residues 380 to 389 are compositionally biased toward basic residues; the sequence is LHVRRRAELG.

This sequence belongs to the bZIP family.

The protein localises to the nucleus. In terms of biological role, transcriptional regulator involved in defense response. This is Transcription factor TGAL10 from Oryza sativa subsp. japonica (Rice).